A 311-amino-acid polypeptide reads, in one-letter code: Ornithine carbamoyltransferase (311 aa).

Residues 57–60 (STRT), glutamine 84, arginine 108, and 135–138 (HPCQ) contribute to the carbamoyl phosphate site. L-ornithine-binding positions include asparagine 166, aspartate 230, and 234 to 235 (SM). Carbamoyl phosphate is bound by residues 270–271 (CL) and arginine 298.

It belongs to the aspartate/ornithine carbamoyltransferase superfamily. OTCase family.

The protein localises to the cytoplasm. The enzyme catalyses carbamoyl phosphate + L-ornithine = L-citrulline + phosphate + H(+). It functions in the pathway amino-acid biosynthesis; L-arginine biosynthesis; L-arginine from L-ornithine and carbamoyl phosphate: step 1/3. Reversibly catalyzes the transfer of the carbamoyl group from carbamoyl phosphate (CP) to the N(epsilon) atom of ornithine (ORN) to produce L-citrulline. The chain is Ornithine carbamoyltransferase from Carboxydothermus hydrogenoformans (strain ATCC BAA-161 / DSM 6008 / Z-2901).